Here is a 197-residue protein sequence, read N- to C-terminus: Adenylate kinase (197 aa).

Residue 16–21 (GAGKGT) participates in ATP binding. Residues 36 to 65 (STGDILRDHVARGTALGQRVKPILDAGQLV) form an NMP region. AMP is bound by residues T37, R42, 63–65 (QLV), 90–93 (GFPR), and Q97. Residues 131–147 (ERGRQAALRGEPVRSDD) are LID. ATP is bound at residue R132. The AMP site is built by R144 and R155. G183 serves as a coordination point for ATP.

It belongs to the adenylate kinase family. As to quaternary structure, monomer.

It is found in the cytoplasm. It catalyses the reaction AMP + ATP = 2 ADP. Its pathway is purine metabolism; AMP biosynthesis via salvage pathway; AMP from ADP: step 1/1. Catalyzes the reversible transfer of the terminal phosphate group between ATP and AMP. Plays an important role in cellular energy homeostasis and in adenine nucleotide metabolism. This Deinococcus geothermalis (strain DSM 11300 / CIP 105573 / AG-3a) protein is Adenylate kinase.